The chain runs to 197 residues: Imidazoleglycerol-phosphate dehydratase (197 aa).

It belongs to the imidazoleglycerol-phosphate dehydratase family.

The protein localises to the cytoplasm. It catalyses the reaction D-erythro-1-(imidazol-4-yl)glycerol 3-phosphate = 3-(imidazol-4-yl)-2-oxopropyl phosphate + H2O. Its pathway is amino-acid biosynthesis; L-histidine biosynthesis; L-histidine from 5-phospho-alpha-D-ribose 1-diphosphate: step 6/9. The polypeptide is Imidazoleglycerol-phosphate dehydratase (Methylocella silvestris (strain DSM 15510 / CIP 108128 / LMG 27833 / NCIMB 13906 / BL2)).